The sequence spans 288 residues: uncharacterized protein (288 aa).

This is an uncharacterized protein from Ictaluridae (bullhead catfishes).